The primary structure comprises 52 residues: MKLPRSSLVWCVLIVCLTLLIFTYLTRKSLCEIRYRDGYREVAAFMAYESGK.

A helical transmembrane segment spans residues 6 to 26 (SSLVWCVLIVCLTLLIFTYLT).

It belongs to the Hok/Gef family.

Its subcellular location is the cell inner membrane. Functionally, toxic component of a type I toxin-antitoxin (TA) system. Part of the plasmid maintenance system, encodes a toxic protein that collapses the transmembrane potential and arrests respiration. When the adjacent non-translated flmB (sok) gene is disrupted FlmA no longer functions in plasmid maintenance (i.e. FlmB probably encodes an antisense antitoxin RNA). Translation of FlmA may be coupled to the upstream flmC gene. The sequence is that of Stable plasmid inheritance protein (flmA) from Escherichia coli O157:H7.